Consider the following 722-residue polypeptide: Polyribonucleotide nucleotidyltransferase (722 aa).

Mg(2+)-binding residues include Asp-505 and Asp-511. The 60-residue stretch at 572–631 (PSITTIKIHPDKIRDVIGKGGATIRGICDETGASIDLDDDGNVKIYADNAAAAQAAVNRV) folds into the KH domain. The S1 motif domain occupies 641 to 709 (GAIYKGRVER…NRGRVKLSMK (69 aa)).

The protein belongs to the polyribonucleotide nucleotidyltransferase family. In terms of assembly, component of the RNA degradosome, which is a multiprotein complex involved in RNA processing and mRNA degradation. It depends on Mg(2+) as a cofactor.

Its subcellular location is the cytoplasm. It catalyses the reaction RNA(n+1) + phosphate = RNA(n) + a ribonucleoside 5'-diphosphate. In terms of biological role, involved in mRNA degradation. Catalyzes the phosphorolysis of single-stranded polyribonucleotides processively in the 3'- to 5'-direction. In Marinobacter nauticus (strain ATCC 700491 / DSM 11845 / VT8) (Marinobacter aquaeolei), this protein is Polyribonucleotide nucleotidyltransferase.